The sequence spans 125 residues: Alpha-endosulfine (125 aa).

Residues 1 to 37 (MSDKYIGDSHLEETGEEKQDSQEKEAVTPEKAEEQKL) show a composition bias toward basic and acidic residues. The disordered stretch occupies residues 1 to 53 (MSDKYIGDSHLEETGEEKQDSQEKEAVTPEKAEEQKLKAKYPNLGQKPGGSDF). The residue at position 28 (T28) is a Phosphothreonine; by CDK2. Phosphoserine; by GWL is present on S67. The segment at 81 to 108 (QLPCAGPDKNLVTGDHIPTPQDLPQRKS) is disordered. Position 99 is a phosphothreonine; by CDK2 (T99). S109 carries the phosphoserine; by PKA modification.

It belongs to the endosulfine family. Post-translationally, phosphorylation at Ser-67 by gwl during mitosis is essential for interaction with ppp2r2d (PR55-delta) and subsequent inactivation of PP2A.

It is found in the cytoplasm. Its function is as follows. Protein phosphatase inhibitor that specifically inhibits protein phosphatase 2A (PP2A) during mitosis. When phosphorylated at Ser-67 during mitosis, specifically interacts with ppp2r2d (PR55-delta) and inhibits its activity, leading to inactivation of PP2A, an essential condition to keep cyclin-B1-CDK1 activity high during M phase. The protein is Alpha-endosulfine (ensa) of Xenopus tropicalis (Western clawed frog).